The sequence spans 323 residues: CIMIP2 protein CG18335 (323 aa).

Belongs to the CIMIP2 family.

The protein resides in the cytoplasm. It localises to the cytoskeleton. It is found in the cilium axoneme. Its function is as follows. Probable microtubule inner protein (MIP) part of the dynein-decorated doublet microtubules (DMTs) in cilium axoneme. The protein is CIMIP2 protein CG18335 of Drosophila melanogaster (Fruit fly).